Reading from the N-terminus, the 222-residue chain is NADH dehydrogenase [ubiquinone] iron-sulfur protein 8-B, mitochondrial (222 aa).

4Fe-4S ferredoxin-type domains lie at 114–143 (RRYPTGEERCIACKLCEAVCPAQAITIEAE) and 153–182 (TRYDIDMTKCIYCGFCQEACPVDAIVEGPN). Residues cysteine 123, cysteine 126, cysteine 129, cysteine 133, cysteine 162, cysteine 165, cysteine 168, and cysteine 172 each coordinate [4Fe-4S] cluster.

This sequence belongs to the complex I 23 kDa subunit family. In terms of assembly, complex I is composed of at least 49 different subunits. This is a component of the iron-sulfur (IP) fragment of the enzyme. [4Fe-4S] cluster serves as cofactor.

The protein localises to the mitochondrion. The catalysed reaction is a ubiquinone + NADH + 5 H(+)(in) = a ubiquinol + NAD(+) + 4 H(+)(out). Core subunit of the mitochondrial membrane respiratory chain NADH dehydrogenase (Complex I) that is believed to belong to the minimal assembly required for catalysis. Complex I functions in the transfer of electrons from NADH to the respiratory chain. The immediate electron acceptor for the enzyme is believed to be ubiquinone. May donate electrons to ubiquinone. This Arabidopsis thaliana (Mouse-ear cress) protein is NADH dehydrogenase [ubiquinone] iron-sulfur protein 8-B, mitochondrial.